We begin with the raw amino-acid sequence, 244 residues long: Putative esophageal gland cell secretory protein 6 (244 aa).

The N-terminal stretch at 1 to 22 (MDRRFTVFLVIALVTSIYEVLS) is a signal peptide. A disulfide bond links cysteine 88 and cysteine 91.

It belongs to the SelWTH family. SELT subfamily.

This chain is Putative esophageal gland cell secretory protein 6 (HSP6), found in Heterodera glycines (Soybean cyst nematode worm).